The following is a 220-amino-acid chain: Small ribosomal subunit protein uS5 (220 aa).

The interval 1–39 is disordered; it reads MAEQPAGQAGTTDNRDARGDREGRRRDSGRGSRERDGEK. Positions 13–39 are enriched in basic and acidic residues; sequence DNRDARGDREGRRRDSGRGSRERDGEK. An S5 DRBM domain is found at 42 to 105; sequence YLERVVAINR…EEARKSFFRV (64 aa).

It belongs to the universal ribosomal protein uS5 family. As to quaternary structure, part of the 30S ribosomal subunit. Contacts proteins S4 and S8.

Its function is as follows. With S4 and S12 plays an important role in translational accuracy. Located at the back of the 30S subunit body where it stabilizes the conformation of the head with respect to the body. The protein is Small ribosomal subunit protein uS5 of Mycobacterium bovis (strain ATCC BAA-935 / AF2122/97).